We begin with the raw amino-acid sequence, 322 residues long: Transaldolase (322 aa).

Lys-136 acts as the Schiff-base intermediate with substrate in catalysis.

It belongs to the transaldolase family. Type 1 subfamily. As to quaternary structure, homodimer.

Its subcellular location is the cytoplasm. The catalysed reaction is D-sedoheptulose 7-phosphate + D-glyceraldehyde 3-phosphate = D-erythrose 4-phosphate + beta-D-fructose 6-phosphate. Its pathway is carbohydrate degradation; pentose phosphate pathway; D-glyceraldehyde 3-phosphate and beta-D-fructose 6-phosphate from D-ribose 5-phosphate and D-xylulose 5-phosphate (non-oxidative stage): step 2/3. Its function is as follows. Transaldolase is important for the balance of metabolites in the pentose-phosphate pathway. This chain is Transaldolase, found in Xanthomonas euvesicatoria pv. vesicatoria (strain 85-10) (Xanthomonas campestris pv. vesicatoria).